Here is a 573-residue protein sequence, read N- to C-terminus: uncharacterized protein (573 aa).

Disordered regions lie at residues 1–33 and 60–101; these read MLQQ…SIPR and LVAN…SRYD. The segment covering 60 to 70 has biased composition (polar residues); sequence LVANRSDNNGN. Asn63 carries N-linked (GlcNAc...) asparagine glycosylation. Residues 84–95 show a composition bias toward low complexity; it reads SSSTSSLPSTRN. Repeat copies occupy residues 102–103, 104–105, 106–107, 108–109, 110–111, 112–113, 114–115, 116–117, 118–119, and 120–121. Residues 102–121 form a 10 X 2 AA tandem repeats of N-M region; sequence NMNMNMNMNMNMNMNMNMNM. A glycan (N-linked (GlcNAc...) asparagine) is linked at Asn123. 4 disordered regions span residues 150–174, 192–271, 286–317, and 357–379; these read IPEK…PRVR, QFPN…IRSN, KSSN…PITS, and NNRI…DKRT. The segment covering 157–170 has biased composition (polar residues); it reads SRYSLRSSPPTYSN. Low complexity predominate over residues 208–225; the sequence is LPPSSTFPDSPSSSSLPL. Positions 226–252 are enriched in polar residues; sequence TQTGGPSSADNDSIATGTNNRSPQQTK. The N-linked (GlcNAc...) asparagine glycan is linked to Asn236. N-linked (GlcNAc...) asparagine glycosylation is found at Asn437 and Asn442. Low complexity-rich tracts occupy residues 441 to 457 and 466 to 483; these read INSS…SSSS and SISS…SKSK. A disordered region spans residues 441–483; sequence INSSISSPAPSSSSSSSLVSRGPMQSISSSPTPAPSSGSSKSK. 3 N-linked (GlcNAc...) asparagine glycosylation sites follow: Asn498, Asn535, and Asn541.

It to yeast AFR1. N-glycosylated.

This is an uncharacterized protein from Saccharomyces cerevisiae (strain ATCC 204508 / S288c) (Baker's yeast).